Reading from the N-terminus, the 221-residue chain is Imidazoleglycerol-phosphate dehydratase (221 aa).

The protein belongs to the imidazoleglycerol-phosphate dehydratase family.

The enzyme catalyses D-erythro-1-(imidazol-4-yl)glycerol 3-phosphate = 3-(imidazol-4-yl)-2-oxopropyl phosphate + H2O. Its pathway is amino-acid biosynthesis; L-histidine biosynthesis; L-histidine from 5-phospho-alpha-D-ribose 1-diphosphate: step 6/9. In Kluyveromyces lactis (strain ATCC 8585 / CBS 2359 / DSM 70799 / NBRC 1267 / NRRL Y-1140 / WM37) (Yeast), this protein is Imidazoleglycerol-phosphate dehydratase (HIS3).